The sequence spans 155 residues: Interleukin-2 (155 aa).

The N-terminal stretch at 1–20 (MYKMQLLSCIALTLVLVANS) is a signal peptide. Threonine 24 carries O-linked (GalNAc...) threonine glycosylation. A disulfide bridge links cysteine 79 with cysteine 127. N-linked (GlcNAc...) asparagine glycosylation is present at asparagine 112.

This sequence belongs to the IL-2 family.

It is found in the secreted. Functionally, cytokine produced by activated CD4-positive helper T-cells and to a lesser extend activated CD8-positive T-cells and natural killer (NK) cells that plays pivotal roles in the immune response and tolerance. Binds to a receptor complex composed of either the high-affinity trimeric IL-2R (IL2RA/CD25, IL2RB/CD122 and IL2RG/CD132) or the low-affinity dimeric IL-2R (IL2RB and IL2RG). Interaction with the receptor leads to oligomerization and conformation changes in the IL-2R subunits resulting in downstream signaling starting with phosphorylation of JAK1 and JAK3. In turn, JAK1 and JAK3 phosphorylate the receptor to form a docking site leading to the phosphorylation of several substrates including STAT5. This process leads to activation of several pathways including STAT, phosphoinositide-3-kinase/PI3K and mitogen-activated protein kinase/MAPK pathways. Functions as a T-cell growth factor and can increase NK-cell cytolytic activity as well. Promotes strong proliferation of activated B-cells and subsequently immunoglobulin production. Plays a pivotal role in regulating the adaptive immune system by controlling the survival and proliferation of regulatory T-cells, which are required for the maintenance of immune tolerance. Moreover, participates in the differentiation and homeostasis of effector T-cell subsets, including Th1, Th2, Th17 as well as memory CD8-positive T-cells. This is Interleukin-2 (IL2) from Canis lupus familiaris (Dog).